We begin with the raw amino-acid sequence, 112 residues long: UPF0342 protein STH1710 (112 aa).

The protein belongs to the UPF0342 family.

The chain is UPF0342 protein STH1710 from Symbiobacterium thermophilum (strain DSM 24528 / JCM 14929 / IAM 14863 / T).